A 341-amino-acid chain; its full sequence is S-adenosylmethionine:tRNA ribosyltransferase-isomerase (341 aa).

Belongs to the QueA family. Monomer.

It localises to the cytoplasm. The catalysed reaction is 7-aminomethyl-7-carbaguanosine(34) in tRNA + S-adenosyl-L-methionine = epoxyqueuosine(34) in tRNA + adenine + L-methionine + 2 H(+). Its pathway is tRNA modification; tRNA-queuosine biosynthesis. Its function is as follows. Transfers and isomerizes the ribose moiety from AdoMet to the 7-aminomethyl group of 7-deazaguanine (preQ1-tRNA) to give epoxyqueuosine (oQ-tRNA). The polypeptide is S-adenosylmethionine:tRNA ribosyltransferase-isomerase (Clostridium kluyveri (strain NBRC 12016)).